The following is a 125-amino-acid chain: RxLR effector protein Avh6 (125 aa).

Positions 1-25 (MRLSSTTFVVLAAVLLASGTAVSKA) are cleaved as a signal peptide. The short motif at 48 to 70 (RFLRSHHTEDGEAKLSNYDNEER) is the RxLR-dEER element.

The protein belongs to the RxLR effector family.

The protein resides in the secreted. It is found in the host cell. In terms of biological role, effector that suppresses plant defense responses during the early stages of pathogen infection. Suppresses cell death induced by effectors and PAMPs in plant hosts. Triggers a hypersensitive response (HR) in the presence of Rps1d. Suppresses BAX-induced cell death and enhan,ced P.capsici infection in Nicotiana benthamiana. Also suppresses effector-triggered immunity induction by associating with Avr1b and Rps1b, suggesting a role in suppressing plant immunity. The protein is RxLR effector protein Avh6 of Phytophthora sojae (strain P6497) (Soybean stem and root rot agent).